The primary structure comprises 107 residues: Phosphoribosyl-ATP pyrophosphatase (107 aa).

It belongs to the PRA-PH family.

Its subcellular location is the cytoplasm. It catalyses the reaction 1-(5-phospho-beta-D-ribosyl)-ATP + H2O = 1-(5-phospho-beta-D-ribosyl)-5'-AMP + diphosphate + H(+). The protein operates within amino-acid biosynthesis; L-histidine biosynthesis; L-histidine from 5-phospho-alpha-D-ribose 1-diphosphate: step 2/9. The chain is Phosphoribosyl-ATP pyrophosphatase from Bacillus cereus (strain AH187).